We begin with the raw amino-acid sequence, 493 residues long: Glutamate--tRNA ligase (493 aa).

Residues 10–20 (PSPTGDPHVGT) carry the 'HIGH' region motif. Residues 251 to 255 (KLSKR) carry the 'KMSKS' region motif. Lys254 provides a ligand contact to ATP.

It belongs to the class-I aminoacyl-tRNA synthetase family. Glutamate--tRNA ligase type 1 subfamily. In terms of assembly, monomer.

It localises to the cytoplasm. The catalysed reaction is tRNA(Glu) + L-glutamate + ATP = L-glutamyl-tRNA(Glu) + AMP + diphosphate. Its function is as follows. Catalyzes the attachment of glutamate to tRNA(Glu) in a two-step reaction: glutamate is first activated by ATP to form Glu-AMP and then transferred to the acceptor end of tRNA(Glu). The protein is Glutamate--tRNA ligase of Pseudomonas putida (strain W619).